A 315-amino-acid polypeptide reads, in one-letter code: Transaldolase (315 aa).

Lys131 (schiff-base intermediate with substrate) is an active-site residue.

Belongs to the transaldolase family. Type 1 subfamily. Homodimer.

It localises to the cytoplasm. It catalyses the reaction D-sedoheptulose 7-phosphate + D-glyceraldehyde 3-phosphate = D-erythrose 4-phosphate + beta-D-fructose 6-phosphate. Its pathway is carbohydrate degradation; pentose phosphate pathway; D-glyceraldehyde 3-phosphate and beta-D-fructose 6-phosphate from D-ribose 5-phosphate and D-xylulose 5-phosphate (non-oxidative stage): step 2/3. Functionally, transaldolase is important for the balance of metabolites in the pentose-phosphate pathway. The polypeptide is Transaldolase (Actinobacillus pleuropneumoniae serotype 3 (strain JL03)).